We begin with the raw amino-acid sequence, 298 residues long: ADP/ATP translocase 1 (298 aa).

The Mitochondrial intermembrane segment spans residues 1-7 (MGDHAWS). Gly-2 carries the post-translational modification N-acetylglycine. One copy of the Solcar 1 repeat lies at 6–98 (WSFLKDFLAG…FAFKDKYKQL (93 aa)). Position 7 is a phosphoserine (Ser-7). Residues 8 to 37 (FLKDFLAGGVAAAVSKTAVAPIERVKLLLQ) form a helical membrane-spanning segment. The Mitochondrial matrix portion of the chain corresponds to 38–74 (VQHASKQISAEKQYKGIIDCVVRIPKEQGFLSFWRGN). Lys-52 carries the N6,N6,N6-trimethyllysine modification. A helical membrane pass occupies residues 75-99 (LANVIRYFPTQALNFAFKDKYKQLF). Arg-80 and Lys-92 together coordinate ADP. The Mitochondrial intermembrane portion of the chain corresponds to 100 to 109 (LGGVDRHKQF). Residues 110 to 130 (WRYFAGNLASGGAAGATSLCF) form a helical membrane-spanning segment. Solcar repeat units follow at residues 111 to 201 (RYFA…AKGM) and 212 to 297 (VSWM…IKKY). Residues 131–178 (VYPLDFARTRLAADVGKGAAQREFHGLGDCIIKIFKSDGLRGLYQGFN) lie on the Mitochondrial matrix side of the membrane. Lys-147 carries the N6-succinyllysine modification. Cys-160 is subject to S-nitrosocysteine. Residues 179 to 199 (VSVQGIIIYRAAYFGVYDTAK) traverse the membrane as a helical segment. Topologically, residues 200-210 (GMLPDPKNVHI) are mitochondrial intermembrane. The helical transmembrane segment at 211–231 (FVSWMIAQSVTAVAGLVSYPF) threads the bilayer. The Mitochondrial matrix portion of the chain corresponds to 232–273 (DTVRRRMMMQSGRKGADIMYTGTVDCWRKIAKDEGAKAFFKG). An ADP-binding site is contributed by Arg-235. The tract at residues 235-240 (RRRMMM) is important for transport activity. The Nucleotide carrier signature motif signature appears at 235 to 240 (RRRMMM). N6-succinyllysine is present on residues Lys-245 and Lys-272. The helical transmembrane segment at 274–291 (AWSNVLRGMGGAFVLVLY) threads the bilayer. Residues 292-298 (DEIKKYV) lie on the Mitochondrial intermembrane side of the membrane.

This sequence belongs to the mitochondrial carrier (TC 2.A.29) family. Monomer. Found in a complex with ARL2, ARL2BP and SLC25A4/ANT1. Interacts with ARL2BP. Interacts with ARHGAP11B, thereby inhibiting the mitochondrial permeability transition pore (mPTP). Interacts with TIMM44; leading to inhibit the presequence translocase TIMM23, thereby promoting stabilization of PINK1. As to quaternary structure, (Microbial infection) Interacts with HIV-1 Vpr. Post-translationally, under cell death induction, transglutaminated by TGM2. Transglutamination leads to formation of covalent cross-links between a glutamine and the epsilon-amino group of a lysine residue, forming polymers. As to expression, expressed in erythrocytes (at protein level).

The protein resides in the mitochondrion inner membrane. It localises to the membrane. It catalyses the reaction ADP(in) + ATP(out) = ADP(out) + ATP(in). It carries out the reaction H(+)(in) = H(+)(out). The matrix-open state (m-state) is inhibited by the membrane-permeable bongkrekic acid (BKA). The cytoplasmic-open state (c-state) is inhibited by the membrane-impermeable toxic inhibitor carboxyatractyloside (CATR). Proton transporter activity is inhibited by ADP:ATP antiporter activity. ADP:ATP antiporter that mediates import of ADP into the mitochondrial matrix for ATP synthesis, and export of ATP out to fuel the cell. Cycles between the cytoplasmic-open state (c-state) and the matrix-open state (m-state): operates by the alternating access mechanism with a single substrate-binding site intermittently exposed to either the cytosolic (c-state) or matrix (m-state) side of the inner mitochondrial membrane. In addition to its ADP:ATP antiporter activity, also involved in mitochondrial uncoupling and mitochondrial permeability transition pore (mPTP) activity. Plays a role in mitochondrial uncoupling by acting as a proton transporter: proton transport uncouples the proton flows via the electron transport chain and ATP synthase to reduce the efficiency of ATP production and cause mitochondrial thermogenesis. Proton transporter activity is inhibited by ADP:ATP antiporter activity, suggesting that SLC25A4/ANT1 acts as a master regulator of mitochondrial energy output by maintaining a delicate balance between ATP production (ADP:ATP antiporter activity) and thermogenesis (proton transporter activity). Proton transporter activity requires free fatty acids as cofactor, but does not transport it. Also plays a key role in mPTP opening, a non-specific pore that enables free passage of the mitochondrial membranes to solutes of up to 1.5 kDa, and which contributes to cell death. It is however unclear if SLC25A4/ANT1 constitutes a pore-forming component of mPTP or regulates it. Acts as a regulator of mitophagy independently of ADP:ATP antiporter activity: promotes mitophagy via interaction with TIMM44, leading to inhibit the presequence translocase TIMM23, thereby promoting stabilization of PINK1. In Homo sapiens (Human), this protein is ADP/ATP translocase 1.